A 750-amino-acid polypeptide reads, in one-letter code: NAD(P)H-quinone oxidoreductase subunit 5, chloroplastic (750 aa).

16 helical membrane passes run 9-29 (WIIP…LLLF), 40-60 (WAFT…NLSI), 89-109 (IDPL…MVLI), 125-145 (FAYM…SNLI), 147-167 (IYIF…FWFT), 185-205 (GDFG…SFEF), 230-250 (AALL…HIWL), 258-278 (TPIS…FLVA), 283-303 (LFIV…ITVL), 327-347 (LGYM…FHLI), 354-374 (ALLF…VGYS), 396-416 (TSFL…CFWS), 425-445 (WLYS…TAFY), 548-568 (LFPL…GIPF), 607-627 (IFSV…YKPI), and 724-744 (LFFY…FYLF).

Belongs to the complex I subunit 5 family. In terms of assembly, NDH is composed of at least 16 different subunits, 5 of which are encoded in the nucleus.

It is found in the plastid. Its subcellular location is the chloroplast thylakoid membrane. The catalysed reaction is a plastoquinone + NADH + (n+1) H(+)(in) = a plastoquinol + NAD(+) + n H(+)(out). It carries out the reaction a plastoquinone + NADPH + (n+1) H(+)(in) = a plastoquinol + NADP(+) + n H(+)(out). Functionally, NDH shuttles electrons from NAD(P)H:plastoquinone, via FMN and iron-sulfur (Fe-S) centers, to quinones in the photosynthetic chain and possibly in a chloroplast respiratory chain. The immediate electron acceptor for the enzyme in this species is believed to be plastoquinone. Couples the redox reaction to proton translocation, and thus conserves the redox energy in a proton gradient. The chain is NAD(P)H-quinone oxidoreductase subunit 5, chloroplastic (ndhF) from Tecoma stans (Yellow bells).